The sequence spans 218 residues: Adapter protein MecA (218 aa).

This sequence belongs to the MecA family. Homodimer.

Enables the recognition and targeting of unfolded and aggregated proteins to the ClpC protease or to other proteins involved in proteolysis. The polypeptide is Adapter protein MecA (Exiguobacterium sp. (strain ATCC BAA-1283 / AT1b)).